Here is a 128-residue protein sequence, read N- to C-terminus: MNSATSETTTNTGAAETTTSTGAAETKTVVTSSISRFNHAETQTASATDVIGHSSSVVSVSETGNTKSLITSGLSTMSQQPRSTPASSIIGSSTASLEISTYVGIANGLLTNNGISVFISTVLLAIVW.

The segment at 1–26 (MNSATSETTTNTGAAETTTSTGAAET) is disordered. The chain crosses the membrane as a helical span at residues 105 to 127 (IANGLLTNNGISVFISTVLLAIV).

This sequence belongs to the flocculin family.

The protein localises to the membrane. This is an uncharacterized protein from Saccharomyces cerevisiae (strain ATCC 204508 / S288c) (Baker's yeast).